Here is a 108-residue protein sequence, read N- to C-terminus: Insulin-like peptide 17 (108 aa).

An N-terminal signal peptide occupies residues 1 to 19; it reads MFSTRGVLLLLSLMAAVAA.

It belongs to the insulin family. Expressed in head neurons and the uterus.

Its subcellular location is the secreted. Its function is as follows. Involved in the regulation of the larval diapause. This chain is Insulin-like peptide 17, found in Caenorhabditis elegans.